A 340-amino-acid polypeptide reads, in one-letter code: Anthranilate phosphoribosyltransferase (340 aa).

5-phospho-alpha-D-ribose 1-diphosphate is bound by residues Gly-82, 85 to 86 (GD), Thr-90, 92 to 95 (NISS), 110 to 118 (KHGGRSVSS), and Ala-122. Gly-82 is an anthranilate binding site. Ser-94 is a Mg(2+) binding site. Residue Arg-168 coordinates anthranilate. Positions 227 and 228 each coordinate Mg(2+).

The protein belongs to the anthranilate phosphoribosyltransferase family. Homodimer. Mg(2+) is required as a cofactor.

It catalyses the reaction N-(5-phospho-beta-D-ribosyl)anthranilate + diphosphate = 5-phospho-alpha-D-ribose 1-diphosphate + anthranilate. It functions in the pathway amino-acid biosynthesis; L-tryptophan biosynthesis; L-tryptophan from chorismate: step 2/5. Its function is as follows. Catalyzes the transfer of the phosphoribosyl group of 5-phosphorylribose-1-pyrophosphate (PRPP) to anthranilate to yield N-(5'-phosphoribosyl)-anthranilate (PRA). This Dechloromonas aromatica (strain RCB) protein is Anthranilate phosphoribosyltransferase.